The primary structure comprises 516 residues: GMP synthase [glutamine-hydrolyzing] (516 aa).

Residues 6–199 (KVLILDFGSQ…LFEIAGLTSG (194 aa)) enclose the Glutamine amidotransferase type-1 domain. Catalysis depends on Cys-83, which acts as the Nucleophile. Residues His-173 and Glu-175 contribute to the active site. The GMPS ATP-PPase domain occupies 200 to 391 (WTMSSFLETE…LGMPDFIIWR (192 aa)). An ATP-binding site is contributed by 227-233 (SGGVDST).

Homodimer.

The catalysed reaction is XMP + L-glutamine + ATP + H2O = GMP + L-glutamate + AMP + diphosphate + 2 H(+). Its pathway is purine metabolism; GMP biosynthesis; GMP from XMP (L-Gln route): step 1/1. In terms of biological role, catalyzes the synthesis of GMP from XMP. The polypeptide is GMP synthase [glutamine-hydrolyzing] (Solidesulfovibrio magneticus (strain ATCC 700980 / DSM 13731 / RS-1) (Desulfovibrio magneticus)).